The sequence spans 87 residues: Neurotoxin Cex4 (87 aa).

The N-terminal stretch at 1–19 (MNSLLMITACLFLIGTVWA) is a signal peptide. The LCN-type CS-alpha/beta domain occupies 20–85 (KEGYLVNKST…TYPLPNKSCG (66 aa)). 4 disulfides stabilise this stretch: cysteine 31-cysteine 84, cysteine 35-cysteine 60, cysteine 44-cysteine 65, and cysteine 48-cysteine 67. Cysteine 84 carries the post-translational modification Cysteine amide. A propeptide spanning residues 85–87 (GRK) is cleaved from the precursor.

The protein belongs to the long (4 C-C) scorpion toxin superfamily. Sodium channel inhibitor family. Beta subfamily. Expressed by the venom gland.

It is found in the secreted. Functionally, beta toxins bind voltage-independently at site-4 of sodium channels (Nav) and shift the voltage of activation toward more negative potentials thereby affecting sodium channel activation and promoting spontaneous and repetitive firing. This Centruroides exilicauda (Bark scorpion) protein is Neurotoxin Cex4.